The sequence spans 443 residues: uncharacterized protein (443 aa).

Active-site proton acceptor residues include H164 and D386.

The protein belongs to the plant acyltransferase family.

This is an uncharacterized protein from Arabidopsis thaliana (Mouse-ear cress).